A 1546-amino-acid chain; its full sequence is DNA-directed RNA polymerase subunit beta' (1546 aa).

4 residues coordinate Zn(2+): Cys57, Cys59, Cys72, and Cys75. Mg(2+)-binding residues include Asp756, Asp758, and Asp760. Zn(2+) contacts are provided by Cys1130, Cys1211, Cys1218, and Cys1221. Positions 1512–1546 are disordered; that stretch reads LEKYGEGSTSSDAVTGGQRYDDTRPGSSINPGYGD. The segment covering 1536–1546 has biased composition (polar residues); the sequence is PGSSINPGYGD.

Belongs to the RNA polymerase beta' chain family. In terms of assembly, the RNAP catalytic core consists of 2 alpha, 1 beta, 1 beta' and 1 omega subunit. When a sigma factor is associated with the core the holoenzyme is formed, which can initiate transcription. Mg(2+) serves as cofactor. The cofactor is Zn(2+).

It carries out the reaction RNA(n) + a ribonucleoside 5'-triphosphate = RNA(n+1) + diphosphate. Functionally, DNA-dependent RNA polymerase catalyzes the transcription of DNA into RNA using the four ribonucleoside triphosphates as substrates. This is DNA-directed RNA polymerase subunit beta' from Deinococcus radiodurans (strain ATCC 13939 / DSM 20539 / JCM 16871 / CCUG 27074 / LMG 4051 / NBRC 15346 / NCIMB 9279 / VKM B-1422 / R1).